The following is a 215-amino-acid chain: Leucyl/phenylalanyl-tRNA--protein transferase (215 aa).

Belongs to the L/F-transferase family.

The protein resides in the cytoplasm. It catalyses the reaction N-terminal L-lysyl-[protein] + L-leucyl-tRNA(Leu) = N-terminal L-leucyl-L-lysyl-[protein] + tRNA(Leu) + H(+). The catalysed reaction is N-terminal L-arginyl-[protein] + L-leucyl-tRNA(Leu) = N-terminal L-leucyl-L-arginyl-[protein] + tRNA(Leu) + H(+). The enzyme catalyses L-phenylalanyl-tRNA(Phe) + an N-terminal L-alpha-aminoacyl-[protein] = an N-terminal L-phenylalanyl-L-alpha-aminoacyl-[protein] + tRNA(Phe). In terms of biological role, functions in the N-end rule pathway of protein degradation where it conjugates Leu, Phe and, less efficiently, Met from aminoacyl-tRNAs to the N-termini of proteins containing an N-terminal arginine or lysine. The sequence is that of Leucyl/phenylalanyl-tRNA--protein transferase from Campylobacter jejuni subsp. jejuni serotype O:6 (strain 81116 / NCTC 11828).